A 254-amino-acid polypeptide reads, in one-letter code: MTRFRLTVEFDGRPFMGWQRQAHGPSVQQAIEEAITAVTGERAVIHAAGRTDARVHGRAMTAHADIAKPITPFRLKEALNARLRPAPVAILACEPVAGDWHARFSCVGRRYVYRIVNRRAPLTFDAGLAWQVAADLDDQAMHAAAQCLVGRHDFTTFRSAHCQAESPVKTLDRLDVRRSGELIEIEAAARSFLHHQVRSMVGCLALVGRGRWTAADLADALAAADRARLGLNAPPDGLYFMEAVYPAETGETAR.

Asp52 functions as the Nucleophile in the catalytic mechanism. A substrate-binding site is contributed by Tyr111.

It belongs to the tRNA pseudouridine synthase TruA family. Homodimer.

The catalysed reaction is uridine(38/39/40) in tRNA = pseudouridine(38/39/40) in tRNA. Its function is as follows. Formation of pseudouridine at positions 38, 39 and 40 in the anticodon stem and loop of transfer RNAs. The chain is tRNA pseudouridine synthase A from Rhizorhabdus wittichii (strain DSM 6014 / CCUG 31198 / JCM 15750 / NBRC 105917 / EY 4224 / RW1) (Sphingomonas wittichii).